A 754-amino-acid chain; its full sequence is RNA exonuclease 5 (754 aa).

A disordered region spans residues 1–36; the sequence is MELEEEENPRKRKETPNSALTTELDRPSWDVQDPEP. One can recognise an Exonuclease domain in the interval 222–370; the sequence is LFGLDCEVCL…EDARTALELV (149 aa). RRM domains are found at residues 488 to 562 and 583 to 662; these read STIY…RLLT and GTIY…RHLQ.

In Rattus norvegicus (Rat), this protein is RNA exonuclease 5 (Rexo5).